The chain runs to 250 residues: 5-oxoprolinase subunit A (250 aa).

It belongs to the LamB/PxpA family. As to quaternary structure, forms a complex composed of PxpA, PxpB and PxpC.

The enzyme catalyses 5-oxo-L-proline + ATP + 2 H2O = L-glutamate + ADP + phosphate + H(+). Catalyzes the cleavage of 5-oxoproline to form L-glutamate coupled to the hydrolysis of ATP to ADP and inorganic phosphate. The polypeptide is 5-oxoprolinase subunit A (Thermus thermophilus (strain ATCC BAA-163 / DSM 7039 / HB27)).